A 279-amino-acid polypeptide reads, in one-letter code: HTH-type transcriptional regulator HdfR (279 aa).

Positions 1–58 (MDTELLKTFLEVSRTRHFGRAAESLYLTQSAVSFRIRQLENQLGVNLFTRHRNNIRLT) constitute an HTH lysR-type domain. Positions 18–37 (FGRAAESLYLTQSAVSFRIR) form a DNA-binding region, H-T-H motif.

The protein belongs to the LysR transcriptional regulatory family.

Functionally, negatively regulates the transcription of the flagellar master operon flhDC by binding to the upstream region of the operon. The polypeptide is HTH-type transcriptional regulator HdfR (Shigella boydii serotype 18 (strain CDC 3083-94 / BS512)).